The primary structure comprises 196 residues: Cell division protein SepF (196 aa).

A disordered region spans residues valine 15–lysine 80. The span at proline 57–lysine 72 shows a compositional bias: low complexity.

It belongs to the SepF family. In terms of assembly, homodimer. Interacts with FtsZ.

It is found in the cytoplasm. Its function is as follows. Cell division protein that is part of the divisome complex and is recruited early to the Z-ring. Probably stimulates Z-ring formation, perhaps through the cross-linking of FtsZ protofilaments. Its function overlaps with FtsA. The sequence is that of Cell division protein SepF from Lactococcus lactis subsp. cremoris (strain MG1363).